The sequence spans 274 residues: Protein YeeZ (274 aa).

A signal peptide spans 1–24; sequence MKKVAIVGLGWLGMPLAMSLSARG. 170 to 177 serves as a coordination point for ATP; that stretch reads GRFFAGKT.

The chain is Protein YeeZ (yeeZ) from Escherichia coli O157:H7.